The primary structure comprises 309 residues: Homoserine O-acetyltransferase (309 aa).

Cysteine 148 serves as the catalytic Acyl-thioester intermediate. Substrate is bound by residues lysine 169 and serine 198. The active-site Proton acceptor is the histidine 241. Residue glutamate 243 is part of the active site. Position 255 (arginine 255) interacts with substrate.

Belongs to the MetA family.

The protein localises to the cytoplasm. It catalyses the reaction L-homoserine + acetyl-CoA = O-acetyl-L-homoserine + CoA. Its pathway is amino-acid biosynthesis; L-methionine biosynthesis via de novo pathway; O-acetyl-L-homoserine from L-homoserine: step 1/1. Its function is as follows. Transfers an acetyl group from acetyl-CoA to L-homoserine, forming acetyl-L-homoserine. In vitro, can also use propionyl-CoA as acyl donor. The chain is Homoserine O-acetyltransferase from Shouchella clausii (Alkalihalobacillus clausii).